The following is a 231-amino-acid chain: Transmembrane protein 225 (231 aa).

Residues 1–13 (MMRIPNRSIQAAN) are Cytoplasmic-facing. Residues 14 to 34 (IFFSSGAILLLIAGLIMENWV) traverse the membrane as a helical segment. Topologically, residues 35–71 (ELIPKVRKDKVTHSPWLGCCPPFWPEESLEAIRRMMM) are extracellular. The chain crosses the membrane as a helical span at residues 72–92 (MSLNISIYLNLIIGLQFTYMI). The Cytoplasmic portion of the chain corresponds to 93–99 (SQNKCVH). Residues 100 to 120 (LLIGFLSFFTGCLLFYAIIVY) form a helical membrane-spanning segment. The Extracellular portion of the chain corresponds to 121-139 (HHKLNKGQYVYFVNYKTKW). Residues 140–160 (IVFTIYLTIALFLTCGIFSFI) form a helical membrane-spanning segment. Residues 161 to 231 (QCTNRCACMK…LQSRRVTWAL (71 aa)) are Cytoplasmic-facing. The RVxF signature appears at 225-229 (RRVTW).

Interacts (via RVxF motif) with PPP1CC. Expressed in testis, specifically in spermatocytes and round spermatids.

It is found in the cytoplasmic vesicle. The protein resides in the secretory vesicle. The protein localises to the acrosome membrane. Functionally, probably inhibits protein phosphatase 1 (PP1) in sperm via binding to catalytic subunit PPP1CC. The polypeptide is Transmembrane protein 225 (Tmem225) (Rattus norvegicus (Rat)).